Consider the following 314-residue polypeptide: uncharacterized protein (314 aa).

2 stretches are compositionally biased toward basic residues: residues 1-16 (MAGN…KAGT) and 49-65 (AAKR…RRPA). Residues 1 to 73 (MAGNSKRRGA…PARKTDETEL (73 aa)) are disordered. Glycine 266, isoleucine 286, and leucine 295 together coordinate S-adenosyl-L-methionine.

This sequence belongs to the class IV-like SAM-binding methyltransferase superfamily. RNA methyltransferase TrmH family.

This is an uncharacterized protein from Mycobacterium sp. (strain KMS).